A 288-amino-acid chain; its full sequence is Acetyl-coenzyme A carboxylase carboxyl transferase subunit beta (288 aa).

One can recognise a CoA carboxyltransferase N-terminal domain in the interval 34–288 (LFAKCPACKH…HLVAFHGGGQ (255 aa)). The Zn(2+) site is built by C38, C41, C56, and C59. The C4-type zinc finger occupies 38 to 59 (CPACKHMIYKKDLGLAKICPTC).

It belongs to the AccD/PCCB family. In terms of assembly, acetyl-CoA carboxylase is a heterohexamer composed of biotin carboxyl carrier protein (AccB), biotin carboxylase (AccC) and two subunits each of ACCase subunit alpha (AccA) and ACCase subunit beta (AccD). Zn(2+) is required as a cofactor.

It is found in the cytoplasm. The enzyme catalyses N(6)-carboxybiotinyl-L-lysyl-[protein] + acetyl-CoA = N(6)-biotinyl-L-lysyl-[protein] + malonyl-CoA. Its pathway is lipid metabolism; malonyl-CoA biosynthesis; malonyl-CoA from acetyl-CoA: step 1/1. Component of the acetyl coenzyme A carboxylase (ACC) complex. Biotin carboxylase (BC) catalyzes the carboxylation of biotin on its carrier protein (BCCP) and then the CO(2) group is transferred by the transcarboxylase to acetyl-CoA to form malonyl-CoA. The polypeptide is Acetyl-coenzyme A carboxylase carboxyl transferase subunit beta (Streptococcus dysgalactiae subsp. equisimilis (strain GGS_124)).